Here is a 38-residue protein sequence, read N- to C-terminus: Photosystem II reaction center protein L (38 aa).

A helical transmembrane segment spans residues 17–37; the sequence is SLYWGLLLIFVLAVLFSSYIF.

Belongs to the PsbL family. In terms of assembly, PSII is composed of 1 copy each of membrane proteins PsbA, PsbB, PsbC, PsbD, PsbE, PsbF, PsbH, PsbI, PsbJ, PsbK, PsbL, PsbM, PsbT, PsbY, PsbZ, Psb30/Ycf12, at least 3 peripheral proteins of the oxygen-evolving complex and a large number of cofactors. It forms dimeric complexes.

It is found in the plastid. It localises to the chloroplast thylakoid membrane. One of the components of the core complex of photosystem II (PSII). PSII is a light-driven water:plastoquinone oxidoreductase that uses light energy to abstract electrons from H(2)O, generating O(2) and a proton gradient subsequently used for ATP formation. It consists of a core antenna complex that captures photons, and an electron transfer chain that converts photonic excitation into a charge separation. This subunit is found at the monomer-monomer interface and is required for correct PSII assembly and/or dimerization. The polypeptide is Photosystem II reaction center protein L (Bigelowiella natans (Pedinomonas minutissima)).